A 529-amino-acid chain; its full sequence is V-set and immunoglobulin domain-containing protein 10 (529 aa).

The signal sequence occupies residues Met-1–Thr-18. Ig-like C2-type domains lie at Val-19 to Ser-110 and Pro-129 to Leu-217. The Extracellular portion of the chain corresponds to Glu-21–Gly-411. N-linked (GlcNAc...) asparagine glycans are attached at residues Asn-34, Asn-35, Asn-46, Asn-135, Asn-147, Asn-159, Asn-211, Asn-269, Asn-280, Asn-284, Asn-330, Asn-357, and Asn-376. A disulfide bridge links Cys-40 with Cys-96. A disulfide bond links Cys-150 and Cys-199. Residues Pro-317–Asn-403 form the Ig-like C2-type 3 domain. Cysteines 335 and 387 form a disulfide. The chain crosses the membrane as a helical span at residues Gly-412–Val-432. The Cytoplasmic segment spans residues Thr-433 to Val-529.

The protein localises to the membrane. This is V-set and immunoglobulin domain-containing protein 10 (vsig10) from Danio rerio (Zebrafish).